The following is a 183-amino-acid chain: Thioredoxin-like protein CITRX, chloroplastic (183 aa).

The N-terminal 81 residues, 1–81 (MALVQSRTFP…REDYLVKKLS (81 aa)), are a transit peptide targeting the chloroplast. The 102-residue stretch at 82–183 (AQELQELVKG…MMHDIIDNEM (102 aa)) folds into the Thioredoxin domain. Catalysis depends on nucleophile residues cysteine 106 and cysteine 109. A disulfide bridge links cysteine 106 with cysteine 109.

It belongs to the thioredoxin family. Plant CITRX-type subfamily. As to quaternary structure, interacts with FLN1 and FLN2. Interacts with MRL7.

It localises to the plastid. Its subcellular location is the chloroplast. In terms of biological role, thiol-disulfide oxidoreductase that plays a role in proper chloroplast development, most likely through regulating plastid-encoded polymerase (PEP) dependent chloroplast transcription. Acts as a component of the transcriptionally active plastid chromosome that is required for plastid gene expression. This is Thioredoxin-like protein CITRX, chloroplastic from Arabidopsis thaliana (Mouse-ear cress).